The sequence spans 486 residues: Siroheme synthase (486 aa).

The interval 1–203 (MNYFPIFANL…RQNTLAEREL (203 aa)) is precorrin-2 dehydrogenase /sirohydrochlorin ferrochelatase. Residues 22 to 23 (AV) and 43 to 44 (KH) contribute to the NAD(+) site. Serine 128 is modified (phosphoserine). The uroporphyrinogen-III C-methyltransferase stretch occupies residues 217–486 (GSVSLVGAGP…LGTGQEQQAA (270 aa)). Proline 226 lines the S-adenosyl-L-methionine pocket. Aspartate 249 (proton acceptor) is an active-site residue. The active-site Proton donor is lysine 271. S-adenosyl-L-methionine contacts are provided by residues 302–304 (GGD), valine 307, 332–333 (TA), methionine 384, and glycine 413.

The protein in the N-terminal section; belongs to the precorrin-2 dehydrogenase / sirohydrochlorin ferrochelatase family. In the C-terminal section; belongs to the precorrin methyltransferase family.

It catalyses the reaction uroporphyrinogen III + 2 S-adenosyl-L-methionine = precorrin-2 + 2 S-adenosyl-L-homocysteine + H(+). The enzyme catalyses precorrin-2 + NAD(+) = sirohydrochlorin + NADH + 2 H(+). The catalysed reaction is siroheme + 2 H(+) = sirohydrochlorin + Fe(2+). It functions in the pathway cofactor biosynthesis; adenosylcobalamin biosynthesis; precorrin-2 from uroporphyrinogen III: step 1/1. It participates in cofactor biosynthesis; adenosylcobalamin biosynthesis; sirohydrochlorin from precorrin-2: step 1/1. Its pathway is porphyrin-containing compound metabolism; siroheme biosynthesis; precorrin-2 from uroporphyrinogen III: step 1/1. The protein operates within porphyrin-containing compound metabolism; siroheme biosynthesis; siroheme from sirohydrochlorin: step 1/1. It functions in the pathway porphyrin-containing compound metabolism; siroheme biosynthesis; sirohydrochlorin from precorrin-2: step 1/1. Functionally, multifunctional enzyme that catalyzes the SAM-dependent methylations of uroporphyrinogen III at position C-2 and C-7 to form precorrin-2 via precorrin-1. Then it catalyzes the NAD-dependent ring dehydrogenation of precorrin-2 to yield sirohydrochlorin. Finally, it catalyzes the ferrochelation of sirohydrochlorin to yield siroheme. The polypeptide is Siroheme synthase (Neisseria meningitidis serogroup A / serotype 4A (strain DSM 15465 / Z2491)).